A 1078-amino-acid polypeptide reads, in one-letter code: Cell wall acid trehalase ATC1 (1078 aa).

An N-terminal signal peptide occupies residues 1 to 54 (MAANSSFFLADNCAPHNQSFIQFCIHAASKKKGRIALMCLANLFLLFSFHLLYA). Residues Asn-4, Asn-17, Asn-150, Asn-184, Asn-242, Asn-287, Asn-301, and Asn-350 are each glycosylated (N-linked (GlcNAc...) asparagine). Residue 478-479 (WD) participates in substrate binding. N-linked (GlcNAc...) asparagine glycosylation is found at Asn-532, Asn-591, and Asn-601. Glu-607 serves as the catalytic Proton donor. Asn-661 and Asn-670 each carry an N-linked (GlcNAc...) asparagine glycan. 676 to 677 (KQ) is a substrate binding site. Asn-829, Asn-837, Asn-904, Asn-922, Asn-931, Asn-946, Asn-1003, and Asn-1037 each carry an N-linked (GlcNAc...) asparagine glycan.

This sequence belongs to the glycosyl hydrolase 65 family.

It localises to the secreted. The protein localises to the cell wall. It carries out the reaction alpha,alpha-trehalose + H2O = alpha-D-glucose + beta-D-glucose. Cell wall acid trehalase that catalyzes hydrolysis of the disaccharide trehalose and required for growth on trehalose as carbon source. Plays a role in dimorphic conversion and virulence. In Candida albicans (strain SC5314 / ATCC MYA-2876) (Yeast), this protein is Cell wall acid trehalase ATC1 (ATC1).